The sequence spans 327 residues: Undecaprenyl-phosphate 4-deoxy-4-formamido-L-arabinose transferase (327 aa).

The next 2 helical transmembrane spans lie at 236–256 and 270–290; these read LSLVGSVIALSGFTLAVLLVV and VFTLFAVLFMFIGAQFVGMGL.

Belongs to the glycosyltransferase 2 family.

It is found in the cell inner membrane. The enzyme catalyses UDP-4-deoxy-4-formamido-beta-L-arabinose + di-trans,octa-cis-undecaprenyl phosphate = 4-deoxy-4-formamido-alpha-L-arabinopyranosyl di-trans,octa-cis-undecaprenyl phosphate + UDP. It participates in glycolipid biosynthesis; 4-amino-4-deoxy-alpha-L-arabinose undecaprenyl phosphate biosynthesis; 4-amino-4-deoxy-alpha-L-arabinose undecaprenyl phosphate from UDP-4-deoxy-4-formamido-beta-L-arabinose and undecaprenyl phosphate: step 1/2. The protein operates within bacterial outer membrane biogenesis; lipopolysaccharide biosynthesis. Functionally, catalyzes the transfer of 4-deoxy-4-formamido-L-arabinose from UDP to undecaprenyl phosphate. The modified arabinose is attached to lipid A and is required for resistance to polymyxin and cationic antimicrobial peptides. This chain is Undecaprenyl-phosphate 4-deoxy-4-formamido-L-arabinose transferase, found in Yersinia enterocolitica serotype O:8 / biotype 1B (strain NCTC 13174 / 8081).